Reading from the N-terminus, the 373-residue chain is Dual-specificity RNA methyltransferase RlmN (373 aa).

Glu94 serves as the catalytic Proton acceptor. A Radical SAM core domain is found at 100-339 (EDDRATLCVS…VIVRKTRGDD (240 aa)). A disulfide bond links Cys107 and Cys344. [4Fe-4S] cluster is bound by residues Cys114, Cys118, and Cys121. S-adenosyl-L-methionine is bound by residues 168–169 (GE), Ser200, 222–224 (SIH), and Asn301. Cys344 acts as the S-methylcysteine intermediate in catalysis.

Belongs to the radical SAM superfamily. RlmN family. [4Fe-4S] cluster is required as a cofactor.

The protein localises to the cytoplasm. The catalysed reaction is adenosine(2503) in 23S rRNA + 2 reduced [2Fe-2S]-[ferredoxin] + 2 S-adenosyl-L-methionine = 2-methyladenosine(2503) in 23S rRNA + 5'-deoxyadenosine + L-methionine + 2 oxidized [2Fe-2S]-[ferredoxin] + S-adenosyl-L-homocysteine. It catalyses the reaction adenosine(37) in tRNA + 2 reduced [2Fe-2S]-[ferredoxin] + 2 S-adenosyl-L-methionine = 2-methyladenosine(37) in tRNA + 5'-deoxyadenosine + L-methionine + 2 oxidized [2Fe-2S]-[ferredoxin] + S-adenosyl-L-homocysteine. Functionally, specifically methylates position 2 of adenine 2503 in 23S rRNA and position 2 of adenine 37 in tRNAs. m2A2503 modification seems to play a crucial role in the proofreading step occurring at the peptidyl transferase center and thus would serve to optimize ribosomal fidelity. In Shewanella baltica (strain OS223), this protein is Dual-specificity RNA methyltransferase RlmN.